We begin with the raw amino-acid sequence, 842 residues long: Oxysterol-binding protein-related protein 7 (842 aa).

The interval Met1–Glu28 is disordered. A compositionally biased stretch (low complexity) spans Ser14 to Ser27. A PH domain is found at Pro47–Leu142. Phosphothreonine is present on Thr171. Phosphoserine is present on residues Ser217, Ser226, Ser256, and Ser272. The disordered stretch occupies residues Asp330–Leu369. Positions Ser354–Leu369 are enriched in low complexity.

It belongs to the OSBP family. Expressed in epithelium of small and large intestines (at protein level). Expressed in stomach, duodenum, jejunum, ascending colon, spleen, thymus, lymph node, trachea and leukocytes.

Its subcellular location is the cytoplasm. The protein localises to the cytosol. It localises to the endoplasmic reticulum membrane. The protein resides in the cell membrane. The chain is Oxysterol-binding protein-related protein 7 (OSBPL7) from Homo sapiens (Human).